The following is an 845-amino-acid chain: Translation initiation factor IF-2 (845 aa).

2 disordered regions span residues 44-91 (KRRK…NLSS) and 119-256 (ARRA…NQEP). Positions 119-129 (ARRAKEREESL) are enriched in basic and acidic residues. The segment covering 139–148 (DETPQEEEEP) has biased composition (acidic residues). The span at 156–165 (SLSPAQSQIE) shows a compositional bias: polar residues. Basic and acidic residues-rich tracts occupy residues 179–194 (IEKR…DRNS) and 202–217 (SEVR…DEKR). In terms of domain architecture, tr-type G spans 343-510 (LRPPVVTIMG…AILLQAEILD (168 aa)). The tract at residues 352–359 (GHVDHGKT) is G1. 352 to 359 (GHVDHGKT) is a GTP binding site. The segment at 377 to 381 (GITQH) is G2. The G3 stretch occupies residues 398–401 (DTPG). Residues 398–402 (DTPGH) and 452–455 (NKID) each bind GTP. The segment at 452-455 (NKID) is G4. The interval 488–490 (SAK) is G5.

It belongs to the TRAFAC class translation factor GTPase superfamily. Classic translation factor GTPase family. IF-2 subfamily.

Its subcellular location is the cytoplasm. Functionally, one of the essential components for the initiation of protein synthesis. Protects formylmethionyl-tRNA from spontaneous hydrolysis and promotes its binding to the 30S ribosomal subunits. Also involved in the hydrolysis of GTP during the formation of the 70S ribosomal complex. The sequence is that of Translation initiation factor IF-2 from Bartonella henselae (strain ATCC 49882 / DSM 28221 / CCUG 30454 / Houston 1) (Rochalimaea henselae).